A 376-amino-acid polypeptide reads, in one-letter code: Growth/differentiation factor 8 (376 aa).

The first 24 residues, 1-24 (MMQKLQMYVYIYLFMLIAAGPVDL), serve as a signal peptide directing secretion. Residues 25–267 (NEGSEREENV…VTDTPKRSRR (243 aa)) constitute a propeptide that is removed on maturation. Asn-72 carries N-linked (GlcNAc...) asparagine glycosylation. Cystine bridges form between Cys-273–Cys-283, Cys-282–Cys-341, Cys-310–Cys-373, and Cys-314–Cys-375.

This sequence belongs to the TGF-beta family. As to quaternary structure, homodimer; disulfide-linked. Interacts with WFIKKN2, leading to inhibit its activity. Interacts with FSTL3. Synthesized as large precursor molecule that undergoes proteolytic cleavage to generate an N-terminal propeptide and a disulfide linked C-terminal dimer, which is the biologically active molecule. The circulating form consists of a latent complex of the C-terminal dimer and other proteins, including its propeptide, which maintain the C-terminal dimer in a latent, inactive state. Ligand activation requires additional cleavage of the prodomain by a tolloid-like metalloproteinase. In terms of tissue distribution, expressed specifically in developing and adult skeletal muscle. Weak expression in adipose tissue.

Its subcellular location is the secreted. Its function is as follows. Acts specifically as a negative regulator of skeletal muscle growth. This is Growth/differentiation factor 8 (Mstn) from Mus musculus (Mouse).